We begin with the raw amino-acid sequence, 643 residues long: 1-deoxy-D-xylulose-5-phosphate synthase (643 aa).

Residues His78 and 119-121 (AHS) contribute to the thiamine diphosphate site. Asp150 lines the Mg(2+) pocket. Residues 151–152 (GS), Asn179, Tyr288, and Glu370 contribute to the thiamine diphosphate site. Asn179 is a Mg(2+) binding site.

The protein belongs to the transketolase family. DXPS subfamily. Homodimer. It depends on Mg(2+) as a cofactor. The cofactor is thiamine diphosphate.

The catalysed reaction is D-glyceraldehyde 3-phosphate + pyruvate + H(+) = 1-deoxy-D-xylulose 5-phosphate + CO2. It functions in the pathway metabolic intermediate biosynthesis; 1-deoxy-D-xylulose 5-phosphate biosynthesis; 1-deoxy-D-xylulose 5-phosphate from D-glyceraldehyde 3-phosphate and pyruvate: step 1/1. Functionally, catalyzes the acyloin condensation reaction between C atoms 2 and 3 of pyruvate and glyceraldehyde 3-phosphate to yield 1-deoxy-D-xylulose-5-phosphate (DXP). In Brucella canis (strain ATCC 23365 / NCTC 10854 / RM-666), this protein is 1-deoxy-D-xylulose-5-phosphate synthase.